A 78-amino-acid chain; its full sequence is Exodeoxyribonuclease 7 small subunit (78 aa).

Belongs to the XseB family. In terms of assembly, heterooligomer composed of large and small subunits.

Its subcellular location is the cytoplasm. It carries out the reaction Exonucleolytic cleavage in either 5'- to 3'- or 3'- to 5'-direction to yield nucleoside 5'-phosphates.. In terms of biological role, bidirectionally degrades single-stranded DNA into large acid-insoluble oligonucleotides, which are then degraded further into small acid-soluble oligonucleotides. The polypeptide is Exodeoxyribonuclease 7 small subunit (Paracoccus zeaxanthinifaciens).